A 155-amino-acid chain; its full sequence is Protein U1 (155 aa).

It belongs to the nanovirus U1 protein family.

This chain is Protein U1 (DNA-U1), found in Cicer arietinum (Chickpea).